Here is a 120-residue protein sequence, read N- to C-terminus: MSQEIAVIGSPAFTTGFQLAGVRKVENVADDEKDDDLDAAVEAVLADEDVGIAVMHDDDLAHLSRGVRQSVEASVEPTFVTIGGGASGASGLRDQIKRAIGIDLMDDDDDASAADTEAGD.

This sequence belongs to the V-ATPase F subunit family. Has multiple subunits with at least A(3), B(3), C, D, E, F, H, I and proteolipid K(x).

The protein localises to the cell membrane. Functionally, component of the A-type ATP synthase that produces ATP from ADP in the presence of a proton gradient across the membrane. The chain is A-type ATP synthase subunit F from Halobacterium salinarum (strain ATCC 29341 / DSM 671 / R1).